Here is a 496-residue protein sequence, read N- to C-terminus: Glutamyl-tRNA(Gln) amidotransferase subunit A (496 aa).

Active-site charge relay system residues include lysine 75 and serine 150. Serine 174 functions as the Acyl-ester intermediate in the catalytic mechanism.

The protein belongs to the amidase family. GatA subfamily. Heterotrimer of A, B and C subunits.

It catalyses the reaction L-glutamyl-tRNA(Gln) + L-glutamine + ATP + H2O = L-glutaminyl-tRNA(Gln) + L-glutamate + ADP + phosphate + H(+). Functionally, allows the formation of correctly charged Gln-tRNA(Gln) through the transamidation of misacylated Glu-tRNA(Gln) in organisms which lack glutaminyl-tRNA synthetase. The reaction takes place in the presence of glutamine and ATP through an activated gamma-phospho-Glu-tRNA(Gln). This chain is Glutamyl-tRNA(Gln) amidotransferase subunit A, found in Burkholderia mallei (strain NCTC 10247).